The primary structure comprises 170 residues: Adenine phosphoribosyltransferase (170 aa).

This sequence belongs to the purine/pyrimidine phosphoribosyltransferase family. In terms of assembly, homodimer.

It is found in the cytoplasm. It catalyses the reaction AMP + diphosphate = 5-phospho-alpha-D-ribose 1-diphosphate + adenine. Its pathway is purine metabolism; AMP biosynthesis via salvage pathway; AMP from adenine: step 1/1. Its function is as follows. Catalyzes a salvage reaction resulting in the formation of AMP, that is energically less costly than de novo synthesis. This is Adenine phosphoribosyltransferase from Clostridioides difficile (strain 630) (Peptoclostridium difficile).